The following is a 321-amino-acid chain: UPF0676 protein C1494.01 (321 aa).

The region spanning 159–267 is the Fe2OG dioxygenase domain; the sequence is EEDVLRLLKY…RQTIAYFVTP (109 aa).

The protein belongs to the UPF0676 family.

It localises to the cytoplasm. Its subcellular location is the nucleus. In Schizosaccharomyces pombe (strain 972 / ATCC 24843) (Fission yeast), this protein is UPF0676 protein C1494.01.